The chain runs to 241 residues: Methylthioribulose-1-phosphate dehydratase (241 aa).

Substrate is bound at residue cysteine 100. Histidine 117 and histidine 119 together coordinate Zn(2+). Glutamate 146 serves as the catalytic Proton donor/acceptor. Histidine 202 lines the Zn(2+) pocket.

The protein belongs to the aldolase class II family. MtnB subfamily. It depends on Zn(2+) as a cofactor.

The protein resides in the cytoplasm. The catalysed reaction is 5-(methylsulfanyl)-D-ribulose 1-phosphate = 5-methylsulfanyl-2,3-dioxopentyl phosphate + H2O. Its pathway is amino-acid biosynthesis; L-methionine biosynthesis via salvage pathway; L-methionine from S-methyl-5-thio-alpha-D-ribose 1-phosphate: step 2/6. Catalyzes the dehydration of methylthioribulose-1-phosphate (MTRu-1-P) into 2,3-diketo-5-methylthiopentyl-1-phosphate (DK-MTP-1-P). This is Methylthioribulose-1-phosphate dehydratase from Ajellomyces dermatitidis (strain ER-3 / ATCC MYA-2586) (Blastomyces dermatitidis).